A 1331-amino-acid chain; its full sequence is Probable serine/threonine-protein kinase DDB_G0272254 (1331 aa).

Composition is skewed to low complexity over residues 1-42 (METS…NSSS), 96-116 (NDNNNSSSSSSSSSSGNNNNN), and 153-175 (TQQTPTTTATTNTSTSTTNSTPS). Disordered stretches follow at residues 1-43 (METS…SSSA), 92-132 (DKIC…QQIS), and 150-175 (ILNTQQTPTTTATTNTSTSTTNSTPS). Helical transmembrane passes span 201–221 (FGFSPIYFVESIFIVLLIYIL) and 224–244 (FVLKETSVYVISIFVIYFVIY). The segment covering 259–287 (SINDSDSSSNNNNNNNNTTTTNNDSASTK) has biased composition (low complexity). 4 disordered regions span residues 259–300 (SIND…PETY), 320–419 (NLNN…LSKE), 435–464 (SVGKTHNRSSSGSDSIQPPPLPTGGSSHNI), and 512–581 (AHSN…VVGN). A compositionally biased stretch (polar residues) spans 288 to 299 (GNNNNEISSPET). A compositionally biased stretch (polar residues) spans 436 to 450 (VGKTHNRSSSGSDSI). A compositionally biased stretch (low complexity) spans 514 to 531 (SNNNNNNNNSNTNNNNNN). Polar residues predominate over residues 532 to 555 (QSVSAPVSQLATPVYQTPGTNSVV). The segment covering 557 to 577 (NLENDNENNNDSFSDINDNNS) has biased composition (low complexity). 6 Kelch repeats span residues 665-710 (SLVL…NHDY), 716-769 (KFYL…RYGN), 770-816 (RFLL…GHTS), 822-868 (KLII…ELND), 909-959 (NIVM…LIKN), and 962-1008 (KLFI…NNNN). Residues 834–860 (NNNNNNNNNNNNNNNNNNNNNNNNNNN) are compositionally biased toward low complexity. The interval 834-862 (NNNNNNNNNNNNNNNNNNNNNNNNNNNKG) is disordered. Residues 976–1042 (NNNSSSGGNN…NNNNNNNNNN (67 aa)) form a disordered region. The Protein kinase domain maps to 1073 to 1331 (IKIDKEIGKG…EITNYLTKTF (259 aa)). ATP-binding positions include 1079 to 1087 (IGKGHFSKV) and K1100. The Proton acceptor role is filled by D1200.

It belongs to the protein kinase superfamily. TKL Ser/Thr protein kinase family.

It is found in the membrane. The enzyme catalyses L-seryl-[protein] + ATP = O-phospho-L-seryl-[protein] + ADP + H(+). It catalyses the reaction L-threonyl-[protein] + ATP = O-phospho-L-threonyl-[protein] + ADP + H(+). This chain is Probable serine/threonine-protein kinase DDB_G0272254, found in Dictyostelium discoideum (Social amoeba).